The following is a 792-amino-acid chain: E3 UFM1-protein ligase 1 (792 aa).

Alanine 2 is subject to N-acetylalanine. Residues 2 to 200 (ADAWEEIRRL…RGLFSAITRP (199 aa)) are mediates interaction with DDRGK1. The interval 2–212 (ADAWEEIRRL…VNSLISRYGF (211 aa)) is required for E3 UFM1-protein ligase activity. Positions 121–250 (DRLAEEVNDK…KAVFIPDIYS (130 aa)) are involved in CDK5RAP3-binding. A mediates interaction with TRIP4 region spans residues 200 to 400 (PTAVNSLISR…NPVHLITEED (201 aa)). The tract at residues 412–471 (TSKKDKKDERRRKATEGSGSVRGGGGSNAREYKIKKTKKKGRKDDDSDDESSHTGKKKPE) is disordered. An Omega-N-methylarginine modification is found at arginine 433. The segment covering 453–471 (RKDDDSDDESSHTGKKKPE) has biased composition (basic and acidic residues). Serine 458 carries the phosphoserine modification. The interval 488–682 (LQDAPEEFIS…QLKVTEDPAL (195 aa)) is mediates interaction with CDK5RAP3. Threonine 534 carries the phosphothreonine modification. Serine 752 carries the post-translational modification Phosphoserine.

It belongs to the UFL1 family. In terms of assembly, catalytic component of the UFM1 ribosome E3 ligase (UREL) complex, composed of UFL1, DDRGK1 and CDK5RAP3. Interacts with E2-like enzyme UFC1. Interacts with RELA. Interacts with NBN; promoting recruitment to double-strand breaks following DNA damage. Interacts (when phosphorylated) with YWHAG/14-3-3-gamma; sequestering UFL1 and preventing its association with PDCD1/PD-1 substrate. Ubiquitinated, leading to its degradation by the proteasome. Interaction with CDK5RAP3 protects both proteins against ubiquitination and degradation via the proteasome. Post-translationally, phosphorylation at Thr-534 by AMPK promotes its interaction with YWHAG/14-3-3-gamma, thereby preventing UFL1 association with PDCD1/PD-1 substrate.

Its subcellular location is the endoplasmic reticulum membrane. The protein resides in the cytoplasm. It localises to the cytosol. It is found in the nucleus. The protein localises to the chromosome. Its function is as follows. E3 protein ligase that mediates ufmylation, the covalent attachment of the ubiquitin-like modifier UFM1 to lysine residues on target proteins, and which plays a key role in various processes, such as ribosome recycling, response to DNA damage, interferon response or reticulophagy (also called ER-phagy). Catalyzes ufmylation of many protein, such as CD274/PD-L1, CDK5RAP3, CYB5R3, DDRGK1, EIF6, histone H4, MRE11, P4HB, PDCD1/PD-1, TRIP4, RPN1, RPS20/uS10, RPL10/uL16, RPL26/uL24, SYVN1/HRD1 and TP53/p53. As part of the UREL complex, plays a key role in ribosome recycling by catalyzing mono-ufmylation of RPL26/uL24 subunit of the 60S ribosome. Ufmylation of RPL26/uL24 occurs on free 60S ribosomes following ribosome dissociation: it weakens the junction between post-termination 60S subunits and SEC61 translocons, promoting release and recycling of the large ribosomal subunit from the endoplasmic reticulum membrane. Ufmylation of RPL26/uL24 and subsequent 60S ribosome recycling either take place after normal termination of translation or after ribosome stalling during cotranslational translocation at the endoplasmic reticulum. Involved in reticulophagy in response to endoplasmic reticulum stress by mediating ufmylation of proteins such as CYB5R3 and RPN1, thereby promoting lysosomal degradation of ufmylated proteins. Ufmylation in response to endoplasmic reticulum stress is essential for processes such as hematopoiesis, blood vessel morphogenesis or inflammatory response. Regulates inflammation in response to endoplasmic reticulum stress by promoting reticulophagy, leading to inhibit the activity of the NF-kappa-B transcription factor. Mediates ufmylation of DDRGK1 and CDK5RAP3; the role of these modifications is however unclear: as both DDRGK1 and CDK5RAP3 act as substrate adapters for ufmylation, it is uncertain whether ufmylation of these proteins is, a collateral effect or is required for ufmylation. Acts as a negative regulator of T-cell activation by mediating ufmylation and stabilization of PDCD1/PD-1. Also involved in the response to DNA damage: recruited to double-strand break sites following DNA damage and mediates monoufmylation of histone H4 and ufmylation of MRE11. Mediates ufmylation of TP53/p53, promoting its stability. Catalyzes ufmylation of TRIP4, thereby playing a role in nuclear receptor-mediated transcription. Required for hematopoietic stem cell function and hematopoiesis. The protein is E3 UFM1-protein ligase 1 of Bos taurus (Bovine).